Reading from the N-terminus, the 628-residue chain is Forkhead box protein O (628 aa).

Disordered regions lie at residues 39–77, 182–205, 217–269, 316–359, and 389–415; these read RARSNTWPCPRPENFVEPTDELDSTKASNQQLAPGDSQQ, KSVRRRAASMETSRYEKRRGRAKK, GLND…RLSP, QQQG…APGY, and NSVTTTMSPAYPNSEPSSDSLNTYSNV. At T44 the chain carries Phosphothreonine; by PKB/AKT1. The segment covering 63–77 has biased composition (polar residues); the sequence is TKASNQQLAPGDSQQ. The residue at position 75 (S75) is a Phosphoserine. A DNA-binding region (fork-head) is located at residues 95-201; that stretch reads WGNLSYADLI…ETSRYEKRRG (107 aa). At S190 the chain carries Phosphoserine; by PKB/AKT1. Polar residues-rich tracts occupy residues 221 to 230 and 256 to 265; these read ATPSPSSSVS and RASSNASSCG. S259 carries the post-translational modification Phosphoserine; by PKB/AKT1. Phosphoserine occurs at positions 262, 263, and 268. The span at 328–337 shows a compositional bias: pro residues; the sequence is SQPPPPPYQP. The segment covering 338-351 has biased composition (low complexity); the sequence is PQHQQAQQQQSPYA. Over residues 402-414 the composition is skewed to polar residues; it reads SEPSSDSLNTYSN.

As to quaternary structure, interacts with melt.

The protein localises to the cytoplasm. It is found in the nucleus. In terms of biological role, transcription factor involved in the regulation of the insulin signaling pathway. Consistently activates both the downstream target Thor\d4EBP and the feedback control target InR. Involved in negative regulation of the cell cycle, modulating cell growth and proliferation. In response to cellular stresses, such as nutrient deprivation or increased levels of reactive oxygen species, foxo is activated and inhibits growth through the action of target genes such as Thor. Foxo activated in the adult fat body can regulate lifespan in adults; an insulin peptide itself may function as one secondary messenger of insulin-regulated aging. Also regulates Lip4, homolog of human acid lipases, thereby acting as a key modulator of lipid metabolism by insulin signaling and integrates insulin responses to glucose and lipid homeostasis. This Drosophila yakuba (Fruit fly) protein is Forkhead box protein O.